Here is a 449-residue protein sequence, read N- to C-terminus: 4-aminobutyrate aminotransferase (449 aa).

The residue at position 294 (lysine 294) is an N6-(pyridoxal phosphate)lysine.

It belongs to the class-III pyridoxal-phosphate-dependent aminotransferase family. Requires pyridoxal 5'-phosphate as cofactor.

It catalyses the reaction 4-aminobutanoate + 2-oxoglutarate = succinate semialdehyde + L-glutamate. The catalysed reaction is (S)-3-amino-2-methylpropanoate + 2-oxoglutarate = 2-methyl-3-oxopropanoate + L-glutamate. The protein operates within amino-acid degradation; 4-aminobutanoate degradation. This is 4-aminobutyrate aminotransferase (gabT) from Mycobacterium bovis (strain ATCC BAA-935 / AF2122/97).